The chain runs to 430 residues: uncharacterized protein (430 aa).

Transmembrane regions (helical) follow at residues 13 to 33, 47 to 67, 88 to 108, 138 to 158, 228 to 248, 264 to 284, 296 to 316, 319 to 339, 358 to 378, and 383 to 403; these read FFAA…FAFF, LAEL…GVVA, VVLF…ILFI, GLNQ…GAFM, LIFG…LPMF, SVFT…GTLI, IPIF…ILWV, AAAF…GGWM, FMMF…PKFV, and YLYY…FIAL.

The protein belongs to the major facilitator superfamily.

It localises to the cell membrane. This is an uncharacterized protein from Bacillus subtilis (strain 168).